Here is a 183-residue protein sequence, read N- to C-terminus: Archaemetzincin (183 aa).

H132 provides a ligand contact to Zn(2+). Residue E133 is the Proton acceptor of the active site. H136, H142, C143, C148, C167, and C170 together coordinate Zn(2+).

It belongs to the peptidase M54 family. Monomer. The cofactor is Zn(2+).

In terms of biological role, probable zinc metalloprotease whose natural substrate is unknown. The chain is Archaemetzincin from Aeropyrum pernix (strain ATCC 700893 / DSM 11879 / JCM 9820 / NBRC 100138 / K1).